Reading from the N-terminus, the 180-residue chain is ATP-dependent protease subunit HslV (180 aa).

Residue Thr6 is part of the active site. Na(+) is bound by residues Gly162, Cys165, and Thr168.

This sequence belongs to the peptidase T1B family. HslV subfamily. A double ring-shaped homohexamer of HslV is capped on each side by a ring-shaped HslU homohexamer. The assembly of the HslU/HslV complex is dependent on binding of ATP.

It is found in the cytoplasm. It catalyses the reaction ATP-dependent cleavage of peptide bonds with broad specificity.. Its activity is regulated as follows. Allosterically activated by HslU binding. In terms of biological role, protease subunit of a proteasome-like degradation complex believed to be a general protein degrading machinery. The sequence is that of ATP-dependent protease subunit HslV from Oleidesulfovibrio alaskensis (strain ATCC BAA-1058 / DSM 17464 / G20) (Desulfovibrio alaskensis).